Consider the following 163-residue polypeptide: Large ribosomal subunit protein bL21 (163 aa).

The disordered stretch occupies residues 124–163; that stretch reads KETTKKTKATVSIKKTAKKPSEKKSAPQKKAAVVSNNKED.

Belongs to the bacterial ribosomal protein bL21 family. As to quaternary structure, part of the 50S ribosomal subunit. Contacts protein L20.

In terms of biological role, this protein binds to 23S rRNA in the presence of protein L20. This chain is Large ribosomal subunit protein bL21, found in Bartonella quintana (strain Toulouse) (Rochalimaea quintana).